Consider the following 490-residue polypeptide: MDYAKRIGQVGALAVVLGVGAAVTTHAIGSAAPTDPSSSSTDSPVDACSPLGGSASSLAAIPGASVPQVGVRQVDPGSIPDDLLNALIDFLAAVRNGLVPIIENRTPVANPQQVSVPEGGTVGPVRFDACDPDGNRMTFAVRERGAPGGPQHGIVTVDQRTASFIYTADPGFVGTDTFSVNVSDDTSLHVHGLAGYLGPFHGHDDVATVTVFVGNTPTDTISGDFSMLTYNIAGLPFPLSSAILPRFFYTKEIGKRLNAYYVANVQEDFAYHQFLIKKSKMPSQTPPEPPTLLWPIGVPFSDGLNTLSEFKVQRLDRQTWYECTSDNCLTLKGFTYSQMRLPGGDTVDVYNLHTNTGGGPTTNANLAQVANYIQQNSAGRAVIVTGDFNARYSDDQSALLQFAQVNGLTDAWVQVEHGPTTPPFAPTCMVGNECELLDKIFYRSGQGVTLQAVSYGNEAPKFFNSKGEPLSDHSPAVVGFHYVADNVAVR.

The N-terminal stretch at 1–31 is a signal peptide; sequence MDYAKRIGQVGALAVVLGVGAAVTTHAIGSA. Residues 30 to 49 form a disordered region; sequence SAAPTDPSSSSTDSPVDACS. At 32-136 the chain is on the periplasmic side; it reads APTDPSSSST…FDACDPDGNR (105 aa). The beta stranded transmembrane segment at 137-145 threads the bilayer; that stretch reads MTFAVRERG. Topologically, residues 146–161 are extracellular; that stretch reads APGGPQHGIVTVDQRT. Residues 162 to 168 traverse the membrane as a beta stranded segment; it reads ASFIYTA. Topologically, residues 169–171 are periplasmic; the sequence is DPG. Residues 172–182 form a beta stranded membrane-spanning segment; the sequence is FVGTDTFSVNV. Over 183–187 the chain is Extracellular; that stretch reads SDDTS. Residues 188 to 196 form a beta stranded membrane-spanning segment; sequence LHVHGLAGY. The Periplasmic segment spans residues 197-204; sequence LGPFHGHD. Residues 205 to 213 traverse the membrane as a beta stranded segment; that stretch reads DVATVTVFV. At 214 to 490 the chain is on the extracellular side; sequence GNTPTDTISG…HYVADNVAVR (277 aa).

Belongs to the SpmT family.

The protein localises to the cell outer membrane. The enzyme catalyses a sphingomyelin + H2O = phosphocholine + an N-acylsphing-4-enine + H(+). In terms of biological role, catalyzes the cleavage of sphingomyelin, a major lipid in eukaryotic cells, into ceramide and phosphocholine, which are then utilized by M.bovis as carbon, nitrogen and phosphorus sources, respectively. Thus, enables M.bovis to utilize sphingomyelin as a source of several essential nutrients for intracellular growth during infection. Furthermore, lyses erythrocytes and constitutes a hemolytic factor. In Mycobacterium bovis (strain ATCC BAA-935 / AF2122/97), this protein is Sphingomyelinase.